Here is a 512-residue protein sequence, read N- to C-terminus: Colistin resistance protein EmrB (512 aa).

14 helical membrane-spanning segments follow: residues 17–37, 55–75, 84–104, 115–135, 144–164, 169–189, 205–225, 234–254, 280–300, 314–334, 341–361, 376–396, 412–432, and 486–506; these read WAIF…IQIV, VTWV…MSSI, VYYT…ALSW, IQGF…YLLF, LVMF…IGGW, FSWH…ATVI, SMDW…EYFL, LADT…MIFF, ITTF…PVFL, VMMV…WLIP, TVFV…HLSI, GIGL…TLPL, IGGA…TAMH, and FNDL…LTIF.

This sequence belongs to the major facilitator superfamily. EmrB family.

The protein localises to the cell inner membrane. In terms of biological role, probably part of an efflux pump system that contributes to adaptation to osmotic stress and resistance to colistin. In Acinetobacter baumannii (strain ATCC 17978 / DSM 105126 / CIP 53.77 / LMG 1025 / NCDC KC755 / 5377), this protein is Colistin resistance protein EmrB.